A 634-amino-acid chain; its full sequence is tRNA uridine 5-carboxymethylaminomethyl modification enzyme MnmG (634 aa).

14–19 serves as a coordination point for FAD; that stretch reads GGGHAG. 279-293 provides a ligand contact to NAD(+); that stretch reads GPRYCPSIEDKVVRF.

It belongs to the MnmG family. As to quaternary structure, homodimer. Heterotetramer of two MnmE and two MnmG subunits. It depends on FAD as a cofactor.

The protein resides in the cytoplasm. Its function is as follows. NAD-binding protein involved in the addition of a carboxymethylaminomethyl (cmnm) group at the wobble position (U34) of certain tRNAs, forming tRNA-cmnm(5)s(2)U34. In Xanthomonas axonopodis pv. citri (strain 306), this protein is tRNA uridine 5-carboxymethylaminomethyl modification enzyme MnmG.